Reading from the N-terminus, the 988-residue chain is uncharacterized protein (988 aa).

Positions 1–17 (MIRLVFLFLLVVLSVEL) are cleaved as a signal peptide. The tract at residues 111–176 (YQNPSTFPST…SKLNQKSSKS (66 aa)) is disordered. The span at 114 to 140 (PSTFPSTTTASTTTSTTTMPPTYQTTT) shows a compositional bias: low complexity. N-linked (GlcNAc...) asparagine glycosylation is found at asparagine 247, asparagine 389, asparagine 529, and asparagine 601. A helical transmembrane segment spans residues 690 to 710 (IMIFTIFSVLSALTCLMCMYL). Asparagine 720 carries an N-linked (GlcNAc...) asparagine glycan. The next 6 membrane-spanning stretches (helical) occupy residues 721 to 741 (LTAVTFLGLAFLSISAPAFII), 753 to 773 (LLFPIAISITIAPVFVKTVLI), 784 to 804 (VLIAFCIVLIQTVISTEWLLL), 832 to 852 (MILLSCSLIALLSLLSFIFAL), 864 to 884 (LMISILAILFETALYVSLPLI), and 891 to 911 (TVMATTILIFAFVALLLSHTG). The tract at residues 966-988 (RSEDTLRRNTSLYGTEGYELPTP) is disordered. Asparagine 974 carries N-linked (GlcNAc...) asparagine glycosylation.

The protein localises to the membrane. This is an uncharacterized protein from Caenorhabditis elegans.